The sequence spans 1333 residues: MECVSVEGLDSSFLEGQTFGDILCLPWTIIKGIRERKNRNKMKIILKNVSLLAKSGEMVLVLGRPGAGCTSFLKSAAGETSQFAGGVTTGHISYDGIPQKEMMQHYKPDVIYNGEQDVHFPHLTVKQTLDFAISCKMPAKRVNNVTKEEYITANREFYAKIFGLTHTFDTKVGNDFISGVSGGERKRVSIAEALAAKGSIYCWDNATRGLDSSTALEFARAIRTMTNLLGTTALVTVYQASENIYETFDKVTVLYAGRQIFCGKTTEAKDYFENMGYLCPPRQSTAEYLTAITDPNGLHEIKPGFEYQVPHTADEFEKYWLDSPEYARLKGEIQKYKHEVNTEWTKKTYNESMAQEKSKGTRKKSYYTVSYWEQIRLCTIRGFLRIYGDKSYTVINTCAAIAQAFITGSLFYQAPSSTLGAFSRSGVLFFSLLYYSLMGLANISFEHRPILQKHKVYSLYHPSAEALASTISSFPFRMIGLTFFIIILYFLAGLHRSAGAFFTMYLLLTMCSEAITSLFQMVSSLCDTLSQANSIAGVVMLSIAMYSTYMIQLPSMHPWFKWISYILPIRYAFESMLNAEFHGRHMDCGGTLVPSGPGFENILPENQVCAFVGSRPGQSWVLGDDYLRAQYQYEYKNTWRNFGIMWCFLIGYIVLRAVFTEYKSPVKSGGDALVVKKGTKNAIQRSWSSKNDEENLNASIATQDMKEIASSNDDSTSADFEGLESTGVFIWKNVSFTIPHSSGQRKLLDSVSGYCVPGTLTALIGESGAGKTTLLNTLAQRNVGTITGDMLVDGLPMDASFKRRTGYVQQQDLHVAELTVKESLQFSARMRRPQSIPDAEKMEYVEKIISILEMQEFSEALVGEIGYGLNVEQRKKLSIGVELVGKPDLLLFLDEPTSGLDSQSAWAVVKMLKRLALAGQSILCTIHQPSATLFEQFDRLLLLGKGGQTIYFGEIGKNSSSVIKYFEKNGARKCQQNENPAEYILEAIGAGATASVQQNWPDIWQKSHEYANINEKINDMIKDLSSTTLHKTATRASKYATSYSYQFHHVLKRSSLTFWRNLNYIMAKMMLLMISGLFIGFTFFHVGVNAIGLQNSLFACFMAIVISAPATNQIQERATVAKELYEVRESKSNMFHWSLLLITHYLNELPYHLLFSTIFFVSSYFPLGVFTEASRSSVFYLNYAILFQLYYIGLALMILYMSPNLQSANVIVGFILSFLLSFCGAVQPASLMPGFWTFMWKLSPYTYFLQNLVGLLMHDKPVRCSKKELSLFNPPVGQTCGEFTKPFFEFGTGYIANPDATADCAYCQYKVGDEYLARINASFSYLWRNFGFI.

Residues 13 to 33 form a helical membrane-spanning segment; sequence FLEGQTFGDILCLPWTIIKGI. Positions 30–281 constitute an ABC transporter 1 domain; it reads IKGIRERKNR…FENMGYLCPP (252 aa). Asn-48, Asn-144, Asn-205, and Asn-350 each carry an N-linked (GlcNAc...) asparagine glycan. Helical transmembrane passes span 392-412, 425-445, 474-494, 499-519, 534-554, and 642-662; these read YTVI…SLFY, SGVL…NISF, FPFR…LAGL, GAFF…TSLF, SIAG…IQLP, and FGIM…FTEY. N-linked (GlcNAc...) asparagine glycans are attached at residues Asn-697 and Asn-733. An ABC transporter 2 domain is found at 729–971; the sequence is FIWKNVSFTI…VIKYFEKNGA (243 aa). Residue 765 to 772 coordinates ATP; the sequence is GESGAGKT. A glycan (N-linked (GlcNAc...) asparagine) is linked at Asn-958. 6 consecutive transmembrane segments (helical) span residues 1071–1091, 1092–1112, 1150–1170, 1178–1198, 1210–1230, and 1235–1255; these read LLMI…VNAI, GLQN…PATN, PYHL…LGVF, VFYL…ALMI, VIVG…QPAS, and FWTF…LVGL. Asn-1320 carries an N-linked (GlcNAc...) asparagine glycan.

The protein belongs to the ABC transporter superfamily. ABCG family. PDR (TC 3.A.1.205) subfamily.

Its subcellular location is the membrane. The polypeptide is ABC transporter ATP-binding protein/permease PDR18 (PDR18) (Saccharomyces cerevisiae (strain ATCC 204508 / S288c) (Baker's yeast)).